The primary structure comprises 229 residues: Endonuclease V (229 aa).

Asp36 and Asp104 together coordinate Mg(2+).

This sequence belongs to the endonuclease V family. The cofactor is Mg(2+).

The protein localises to the cytoplasm. It carries out the reaction Endonucleolytic cleavage at apurinic or apyrimidinic sites to products with a 5'-phosphate.. In terms of biological role, DNA repair enzyme involved in the repair of deaminated bases. Selectively cleaves double-stranded DNA at the second phosphodiester bond 3' to a deoxyinosine leaving behind the intact lesion on the nicked DNA. This Pectobacterium carotovorum subsp. carotovorum (strain PC1) protein is Endonuclease V.